We begin with the raw amino-acid sequence, 216 residues long: Redox-sensing transcriptional repressor Rex (216 aa).

The H-T-H motif DNA-binding region spans 16–55 (VYYRYLNVLLNANKHRVSSTELSEAVQVDSATIRRDFSYF). 90 to 95 (GVGSLG) provides a ligand contact to NAD(+).

The protein belongs to the transcriptional regulatory Rex family. Homodimer.

It is found in the cytoplasm. Its function is as follows. Modulates transcription in response to changes in cellular NADH/NAD(+) redox state. The chain is Redox-sensing transcriptional repressor Rex from Limosilactobacillus fermentum (strain NBRC 3956 / LMG 18251) (Lactobacillus fermentum).